The sequence spans 394 residues: Growth-regulating factor 4 (394 aa).

Residues 64–99 enclose the QLQ domain; it reads PFTAAQYEELEQQALIYKYLVAGVPVPPDLVLPIRR. Positions 125 to 169 constitute a WRC domain; the sequence is DPEPGRCRRTDGKKWRCSKEAAPDSKYCERHMHRGRNRSRKPVET. 2 consecutive short sequence motifs (bipartite nuclear localization signal) follow at residues 130–140 and 158–165; these read RCRRTDGKKWR and RGRNRSRK. Residues 156-180 form a disordered region; it reads MHRGRNRSRKPVETQLVAQSQPPSS. The span at 170 to 180 shows a compositional bias: low complexity; that stretch reads QLVAQSQPPSS.

This sequence belongs to the GRF family. As to quaternary structure, interacts with GIF1. Interacts with GSK2. As to expression, expressed in stems. Expressed in panicles.

The protein localises to the nucleus. Transactivation activity is repressed by GSK2. In terms of biological role, transcription activator that plays a role in the regulation of meristematic function in leaves, stems and inflorescences. Transcription activator that plays a regulatory role in grain development. Positively regulates grain size by promoting cell division and expansion, leading to increased grain length and width. Positively regulates the expression of genes promoting cell proliferation. Activates the expression of expansin genes to promote cell expansion and grain size. May promote grain size by activating brassinosteroid responses. Component of a network formed by the microRNA396 (miRNA396), the GRFs and their interacting factors (GIFs) acting in the regulation of meristem function, at least partially through the control of cell proliferation. Component of the miRNA396c-GRF4-GIF1 regulatory module that plays an important role in grain size determination. The sequence is that of Growth-regulating factor 4 from Oryza sativa subsp. japonica (Rice).